Consider the following 376-residue polypeptide: Histidinol-phosphate aminotransferase (376 aa).

Lys-230 is modified (N6-(pyridoxal phosphate)lysine).

Belongs to the class-II pyridoxal-phosphate-dependent aminotransferase family. Histidinol-phosphate aminotransferase subfamily. In terms of assembly, homodimer. It depends on pyridoxal 5'-phosphate as a cofactor.

The enzyme catalyses L-histidinol phosphate + 2-oxoglutarate = 3-(imidazol-4-yl)-2-oxopropyl phosphate + L-glutamate. It participates in amino-acid biosynthesis; L-histidine biosynthesis; L-histidine from 5-phospho-alpha-D-ribose 1-diphosphate: step 7/9. The chain is Histidinol-phosphate aminotransferase from Trichodesmium erythraeum (strain IMS101).